We begin with the raw amino-acid sequence, 831 residues long: Maltodextrin phosphorylase (831 aa).

Position 592 is an N6-(pyridoxal phosphate)lysine (Lys-592).

Belongs to the glycogen phosphorylase family. As to quaternary structure, trimer (at 25 degrees Celsius). Pyridoxal 5'-phosphate is required as a cofactor.

It carries out the reaction [(1-&gt;4)-alpha-D-glucosyl](n) + phosphate = [(1-&gt;4)-alpha-D-glucosyl](n-1) + alpha-D-glucose 1-phosphate. In terms of biological role, phosphorylase is an important allosteric enzyme in carbohydrate metabolism. Catalyzes the phospholytic cleavage of maltodextrins with a minimal chain length of five glucose residues to yield glucose-1-phosphate. Low activity with tetraose and no activity with triose and maltose. Long maltodextrins (8 to 15 glucose units), amylose and starch are not as good substrates as maltoheptaose. This chain is Maltodextrin phosphorylase (malP), found in Thermococcus litoralis (strain ATCC 51850 / DSM 5473 / JCM 8560 / NS-C).